A 281-amino-acid polypeptide reads, in one-letter code: Auxin-responsive protein IAA19 (281 aa).

An EAR-like (transcriptional repression) motif is present at residues 40–44 (LRLGL). Residues 66–126 (LGPAPPPRGG…AAGAPRAAKA (61 aa)) form a disordered region. A compositionally biased stretch (basic and acidic residues) spans 79 to 91 (GFVDSLDRSEGRR). The span at 114 to 126 (GEAAAGAPRAAKA) shows a compositional bias: low complexity. The 105-residue stretch at 161-265 (CCYVKVSMDG…RKLRIMRGSD (105 aa)) folds into the PB1 domain.

It belongs to the Aux/IAA family. In terms of assembly, homodimers and heterodimers. As to expression, expressed in etiolated seedlings and flowers.

It is found in the nucleus. Its function is as follows. Aux/IAA proteins are short-lived transcriptional factors that function as repressors of early auxin response genes at low auxin concentrations. The protein is Auxin-responsive protein IAA19 (IAA19) of Oryza sativa subsp. japonica (Rice).